Here is a 346-residue protein sequence, read N- to C-terminus: MKIDINLNDDNKNYSVFIDELKNLKFKGKVAVITNSKVGGLYLGEILNLIDADEIFSVCIPDGEQYKNLAMIEYILEQLFVSRLERNSTLIALGGGVISDMTGFAASIYERGINFINIPTTLLAQVDASVGGKTGVNNKFGKNLIGTFYQPKAVYCETKFLNSLPNREFNAGMAEVIKMATMFDKDFFKFIQDNSVENSQILKQIIAKCVEIKAGVVAKDEKESGIRAVLNYGHTFAHVIEMQTNYKKFLHGEAVAIGINMANHLACKLGLLSKKDLDIIEQTLIKFGLPTTYRISDEEVFYDSFFLDKKSENKKIKFILPNGIGSYALRNDIDKNSVLDILRMFK.

NAD(+) contacts are provided by residues Asp62 to Lys67, Gly96 to Asp100, Thr120 to Thr121, Lys133, and Lys142. Residues Glu175, His234, and His251 each contribute to the Zn(2+) site.

It belongs to the sugar phosphate cyclases superfamily. Dehydroquinate synthase family. Requires Co(2+) as cofactor. The cofactor is Zn(2+). NAD(+) is required as a cofactor.

The protein localises to the cytoplasm. The catalysed reaction is 7-phospho-2-dehydro-3-deoxy-D-arabino-heptonate = 3-dehydroquinate + phosphate. It participates in metabolic intermediate biosynthesis; chorismate biosynthesis; chorismate from D-erythrose 4-phosphate and phosphoenolpyruvate: step 2/7. Functionally, catalyzes the conversion of 3-deoxy-D-arabino-heptulosonate 7-phosphate (DAHP) to dehydroquinate (DHQ). The polypeptide is 3-dehydroquinate synthase (Campylobacter fetus subsp. fetus (strain 82-40)).